A 142-amino-acid polypeptide reads, in one-letter code: MAPTTKASAAKKAALKGVNGKKALKVRTSTTFRLPKTLKLTRSPKYQRKSVPHYNRLDAHKIIVAPIATETAMKKVEDGNTLVFQVDIKSNKHQIKSAVKELYDVDALYVNTLIRPNGTKKAYIRLTSDYDALDIANRIGYI.

The protein belongs to the universal ribosomal protein uL23 family. As to quaternary structure, component of the large ribosomal subunit. Mature ribosomes consist of a small (40S) and a large (60S) subunit. The 40S subunit contains about 32 different proteins and 1 molecule of RNA (18S). The 60S subunit contains 45 different proteins and 3 molecules of RNA (25S, 5.8S and 5S).

The protein localises to the cytoplasm. Its function is as follows. Component of the ribosome, a large ribonucleoprotein complex responsible for the synthesis of proteins in the cell. The small ribosomal subunit (SSU) binds messenger RNAs (mRNAs) and translates the encoded message by selecting cognate aminoacyl-transfer RNA (tRNA) molecules. The large subunit (LSU) contains the ribosomal catalytic site termed the peptidyl transferase center (PTC), which catalyzes the formation of peptide bonds, thereby polymerizing the amino acids delivered by tRNAs into a polypeptide chain. The nascent polypeptides leave the ribosome through a tunnel in the LSU and interact with protein factors that function in enzymatic processing, targeting, and the membrane insertion of nascent chains at the exit of the ribosomal tunnel. RPL25 is a major component of the universal docking site for these factors at the polypeptide exit tunnel. The polypeptide is Large ribosomal subunit protein uL23 (Candida albicans (strain SC5314 / ATCC MYA-2876) (Yeast)).